Reading from the N-terminus, the 60-residue chain is DNA-binding protein 7c (60 aa).

The segment at 37–60 (DNGKTGRGAVSEKDAPKELLEKLK) is disordered. The span at 46-60 (VSEKDAPKELLEKLK) shows a compositional bias: basic and acidic residues.

It belongs to the 7 kDa DNA-binding/endoribonuclease P2 family. As to quaternary structure, monomer.

The protein resides in the cytoplasm. Functionally, can constrain negative DNA supercoils. May be involved in maintaining the integrity of the genome at high temperature. This is DNA-binding protein 7c from Acidianus hospitalis (strain W1).